A 101-amino-acid chain; its full sequence is Aspartyl/glutamyl-tRNA(Asn/Gln) amidotransferase subunit C (101 aa).

This sequence belongs to the GatC family. As to quaternary structure, heterotrimer of A, B and C subunits.

It catalyses the reaction L-glutamyl-tRNA(Gln) + L-glutamine + ATP + H2O = L-glutaminyl-tRNA(Gln) + L-glutamate + ADP + phosphate + H(+). The enzyme catalyses L-aspartyl-tRNA(Asn) + L-glutamine + ATP + H2O = L-asparaginyl-tRNA(Asn) + L-glutamate + ADP + phosphate + 2 H(+). Allows the formation of correctly charged Asn-tRNA(Asn) or Gln-tRNA(Gln) through the transamidation of misacylated Asp-tRNA(Asn) or Glu-tRNA(Gln) in organisms which lack either or both of asparaginyl-tRNA or glutaminyl-tRNA synthetases. The reaction takes place in the presence of glutamine and ATP through an activated phospho-Asp-tRNA(Asn) or phospho-Glu-tRNA(Gln). The chain is Aspartyl/glutamyl-tRNA(Asn/Gln) amidotransferase subunit C from Enterococcus faecalis (strain ATCC 700802 / V583).